We begin with the raw amino-acid sequence, 327 residues long: dTDP-4-dehydrorhamnose reductase (327 aa).

A disordered region spans residues 1–22 (MDLINGMGTSPGYWRTPREPGN). NADH-binding positions include 43-45 (GMV), 69-70 (DI), and 91-93 (AYT). Residues 44–45 (MV), 69–70 (DI), and 91–93 (AYT) contribute to the NADPH site. 132-133 (TD) lines the dTDP-beta-L-rhamnose pocket. Residues Tyr-157 and Lys-161 each coordinate NADH. NADPH-binding residues include Tyr-157 and Lys-161. The Proton donor/acceptor role is filled by Tyr-157. Trp-182 is a binding site for dTDP-beta-L-rhamnose. The segment covering 264 to 276 (PERVRPCGSDRHP) has biased composition (basic and acidic residues). Positions 264 to 292 (PERVRPCGSDRHPRPAPRPSYTVLSSQRS) are disordered.

Belongs to the dTDP-4-dehydrorhamnose reductase family. Requires Mg(2+) as cofactor.

It catalyses the reaction dTDP-beta-L-rhamnose + NADP(+) = dTDP-4-dehydro-beta-L-rhamnose + NADPH + H(+). The protein operates within carbohydrate biosynthesis; dTDP-L-rhamnose biosynthesis. In terms of biological role, involved in the biosynthesis of the dTDP-L-rhamnose which is a component of the critical linker, D-N-acetylglucosamine-L-rhamnose disaccharide, which connects the galactan region of arabinogalactan to peptidoglycan via a phosphodiester linkage. Catalyzes the reduction of dTDP-6-deoxy-L-lyxo-4-hexulose to yield dTDP-L-rhamnose. This Mycolicibacterium smegmatis (strain ATCC 700084 / mc(2)155) (Mycobacterium smegmatis) protein is dTDP-4-dehydrorhamnose reductase.